The following is a 600-amino-acid chain: Proline--tRNA ligase (600 aa).

It belongs to the class-II aminoacyl-tRNA synthetase family. ProS type 1 subfamily. Homodimer.

It is found in the cytoplasm. It carries out the reaction tRNA(Pro) + L-proline + ATP = L-prolyl-tRNA(Pro) + AMP + diphosphate. Catalyzes the attachment of proline to tRNA(Pro) in a two-step reaction: proline is first activated by ATP to form Pro-AMP and then transferred to the acceptor end of tRNA(Pro). As ProRS can inadvertently accommodate and process non-cognate amino acids such as alanine and cysteine, to avoid such errors it has two additional distinct editing activities against alanine. One activity is designated as 'pretransfer' editing and involves the tRNA(Pro)-independent hydrolysis of activated Ala-AMP. The other activity is designated 'posttransfer' editing and involves deacylation of mischarged Ala-tRNA(Pro). The misacylated Cys-tRNA(Pro) is not edited by ProRS. This chain is Proline--tRNA ligase, found in Prochlorococcus marinus (strain MIT 9215).